The sequence spans 510 residues: MWRLTGILGRALPRLLGPGFRGITPKPTSSDGSQTTSPTLPLTRLSFDRSGSHGSKRSRDPKCCGWKDAFHWMSAHVSPNTLRDAISWGTLAVLALHLARQIHFHAPLVAGPQPAERSWHSPLYRFLSSSWWHPHSSLRRHVLPRSDCPAPRNTGLREPRQGQEDHPSAPSQCLPSDSSLRSGLLNLPEEEPSDFDFLHASRDFASQAKAAEAHPPGGKNEQDKAKALPLEEAVTSIQQLFQLSVAITFNFLGTENIKTGDYTAAFSYFQKAADRGYSKAQYNVGLCLEHGRGTPRDLSKAILFYHLAAVQGHSLAQYRYARCLLQSPGSLSDPERERAVSLLKQAADSGLTEAQAFLGVLFTKEPHLDEQRAVKYLWLAASNGDSQSRFHLGICYEKGLGAQRNLGEAVKCYQQAAAMGNEPARERLRTLFNVEAAGPSHLATTGLKSFSSPSLCSLNTLLAGASGLPHASSTGNLGLLCRSGHLGASHGAPSRTIPSLERSLVRLGFG.

Residues 1-23 (MWRLTGILGRALPRLLGPGFRGI) constitute a mitochondrion transit peptide. Disordered stretches follow at residues 19-61 (GFRG…SRDP) and 142-185 (VLPR…SGLL). Positions 24 to 101 (TPKPTSSDGS…AVLALHLARQ (78 aa)) are cleaved as a propeptide — extended MTS. Residues 35–45 (TTSPTLPLTRL) show a composition bias toward low complexity. Basic and acidic residues-rich tracts occupy residues 46-61 (SFDRSGSHGSKRSRDP) and 155-167 (GLREPRQGQEDHP). Residues 169 to 181 (APSQCLPSDSSLR) are compositionally biased toward polar residues. TPR repeat units lie at residues 213-245 (AHPPGGKNEQDKAKALPLEEAVTSIQQLFQLSV), 246-278 (AITFNFLGTENIKTGDYTAAFSYFQKAADRGYS), 279-313 (KAQYNVGLCLEHGRGTPRDLSKAILFYHLAAVQGH), 314-351 (SLAQYRYARCLLQSPGSLSDPERERAVSLLKQAADSGL), 352-385 (TEAQAFLGVLFTKEPHLDEQRAVKYLWLAASNGD), 386-423 (SQSRFHLGICYEKGLGAQRNLGEAVKCYQQAAAMGNEP), and 471-499 (ASSTGNLGLLCRSGHLGASHGAPSRTIPS). The SIFI-degron motif lies at 307-326 (LAAVQGHSLAQYRYARCLLQ).

The protein belongs to the DELE1 family. As to quaternary structure, interacts with DAP3. Interacts (via TPR repeats) with EIF2AK1/HRI; activating the protein kinase activity of EIF2AK1/HRI, thereby promoting the integrated stress response (ISR). In terms of assembly, homooctamer; oligomerization is required to activate EIF2AK1/HRI. Interacts (via TPR repeats) with EIF2AK1/HRI; activating the protein kinase activity of EIF2AK1/HRI, thereby promoting the integrated stress response (ISR). In terms of processing, unstable protein in absence of stress: imported in the mitochondrial matrix following processing by the mitochondrial-processing peptidase (MPP), where it is degraded by LONP1. Stabilized in response to iron deficiency: iron deficiency impairs mitochondrial import, promoting localization at the mitochondrial surface and stabilization. Cleaved by OMA1 in response to mitochondrial stress, generating the DAP3-binding cell death enhancer 1 short form (DELE1(S) or S-DELE1) that accumulates in the cytosol and activates the protein kinase activity of EIF2AK1/HRI. Protein cleavage by OMA1 can take place at different positions, and apparently does not require a specific sequence motif. Post-translationally, ubiquitinated and degraded by the SIFI complex once the mitochondrial stress has been resolved, thereby providing stress response silencing. Within the SIFI complex, UBR4 initiates ubiquitin chain that are further elongated or branched by KCMF1.

The protein resides in the mitochondrion. It localises to the mitochondrion outer membrane. Its subcellular location is the mitochondrion inner membrane. The protein localises to the cytoplasm. It is found in the cytosol. Protein kinase activator that acts as a key activator of the integrated stress response (ISR) following various stresses, such as iron deficiency, mitochondrial stress or mitochondrial DNA breaks. Detects impaired protein import and processing in mitochondria, activating the ISR. May also required for the induction of death receptor-mediated apoptosis through the regulation of caspase activation. In terms of biological role, protein kinase activator that activates the ISR in response to iron deficiency: iron deficiency impairs mitochondrial import, promoting DELE1 localization at the mitochondrial surface, where it binds and activates EIF2AK1/HRI to trigger the ISR. Functionally, protein kinase activator generated by protein cleavage in response to mitochondrial stress, which accumulates in the cytosol and specifically binds to and activates the protein kinase activity of EIF2AK1/HRI. It thereby activates the integrated stress response (ISR): EIF2AK1/HRI activation promotes eIF-2-alpha (EIF2S1) phosphorylation, leading to a decrease in global protein synthesis and the induction of selected genes, including the transcription factor ATF4, the master transcriptional regulator of the ISR. Also acts as an activator of PRKN-independent mitophagy: activates the protein kinase activity of EIF2AK1/HRI in response to mitochondrial damage, promoting eIF-2-alpha (EIF2S1) phosphorylation, leading to mitochondrial localization of EIF2S1 followed by induction of mitophagy. This chain is DAP3-binding cell death enhancer 1, found in Mus musculus (Mouse).